The chain runs to 1460 residues: Actin cytoskeleton-regulatory complex protein PAN1 (1460 aa).

Residues 1–56 (MYNPYQQQGMGYQQQQQQQQQQPNGFYPQQQQGQSSNQPQGQPQPQQQMAFNQPQA) show a composition bias toward low complexity. Positions 1 to 151 (MYNPYQQQGM…SIQPQGTGYY (151 aa)) are disordered. Over residues 65–79 (SFGNSFSTMPQQPQT) the composition is skewed to polar residues. 3 stretches are compositionally biased toward low complexity: residues 80-110 (GYNN…VKPQ), 117-128 (NSSMPMMNTTGT), and 136-146 (QQPQLQSIQPQ). A run of 5 repeats spans residues 142–153 (SIQPQGTGYYQS), 164–175 (PLQSQGTGYYVS), 188–199 (PLQAQGTGYYQS), 215–226 (PLKPQQTGFYLQ), and 235–246 (PLKPTATGFVNS). Positions 142 to 568 (SIQPQGTGYY…TAQKTGFGNN (427 aa)) are 15 X 12 AA tandem repeats of [SPNAG]-[IL]-[QKNGT]-[PSA]-[QT]-[GQAPISTLYK]-T-G-[YFGML]-[YVMGAQL]-[QVLNPAG]-[ASQPN]. Positions 185 to 197 (TQQPLQAQGTGYY) are enriched in polar residues. Positions 185 to 214 (TQQPLQAQGTGYYQSQPQQVPPPQQAQSLQ) are disordered. Residue T241 is modified to Phosphothreonine. EF-hand domains are found at residues 269–304 (QDQA…SGLP) and 306–338 (SQLA…INDV). The EH 1 domain maps to 270 to 359 (DQAKFETLFR…SKTKNEVSSF (90 aa)). Tandem repeats lie at residues 328–350 (FALA…ELDS), 392–403 (NLQPQPTGYMPQ), 409–420 (PLQSQITGGGVA), 422–433 (ALNPQSTGFMAP), 446–457 (GLNPQITGGAPA), 467–478 (ALQPQTTGMMPQ), 491–502 (NLGPQLTGGALQ), 503–511 (SQYTGGYGS), 531–541 (GLQSQLTGLQP), 542–549 (QPTGFLPP), and 557–568 (PLTAQKTGFGNN). A 2 X 23 AA repeats of F-A-L-[AG]-M-H-L-[IV]-[NY]-[DG]-[VK]-L-[QN]-G-[DK]-[TP]-I-P-[YN]-[EV]-L-[DP]-S region spans residues 328 to 672 (FALAMHLIND…GKPIPNVLPS (345 aa)). T563 is modified (phosphothreonine). In terms of domain architecture, EH 2 spans 593-681 (EKSLFYKFLK…SSLIPSSTKL (89 aa)). Residues 625–660 (LNRADLEQIWNLCDINNTGQLNKQEFALGMHLVYGK) enclose the EF-hand 3 domain. D638, N640, T642, Q644, and E649 together coordinate Ca(2+). Residues 650-672 (FALGMHLVYGKLNGKPIPNVLPS) form a 2-2 repeat. Disordered regions lie at residues 729 to 758 (SAKN…TDDI), 880 to 901 (ALTG…QQSA), 969 to 1127 (NSNK…EKRL), and 1149 to 1460 (LRKQ…PPLP). The segment covering 735–757 (QSSFSSPSAKSVNHSSSTLQTDD) has biased composition (polar residues). Phosphoserine is present on residues S739 and S749. The span at 888–899 (SEDSLSMEDEQQ) shows a compositional bias: acidic residues. The span at 973–988 (SVTESSPFVPSSTPTP) shows a compositional bias: low complexity. T985 and T987 each carry phosphothreonine. A Phosphoserine modification is found at S995. The span at 1003–1030 (TAEERAAYLKEQAKKRMKEKLAKFDKNR) shows a compositional bias: basic and acidic residues. Residues 1048–1058 (QPQQIAGSSNL) show a composition bias toward polar residues. 5 repeat units span residues 1076–1081 (QPTQPV), 1082–1087 (QSTQPV), 1088–1093 (QPTQPV), 1094–1099 (QPTQPV), and 1100–1105 (QPTQPV). Residues 1076 to 1105 (QPTQPVQSTQPVQPTQPVQPTQPVQPTQPV) form a 5 X 6 AA tandem repeats of Q-[PS]-T-Q-P-V region. Over residues 1076–1106 (QPTQPVQSTQPVQPTQPVQPTQPVQPTQPVQ) the composition is skewed to low complexity. Residues 1111–1170 (AKQESDDEDEDDEEKRLQEELKRLKLKKKADKEKRLAALRKQIEDAQNESDEEETNGKDN) adopt a coiled-coil conformation. The residue at position 1160 (S1160) is a Phosphoserine. Residues 1175–1188 (VNVPQAAPVAPSAA) are compositionally biased toward low complexity. The segment covering 1210 to 1221 (KNSTGLPSTTMG) has biased composition (polar residues). Low complexity predominate over residues 1228-1239 (DASASSTSTFDA). Phosphoserine occurs at positions 1230 and 1233. The span at 1240-1252 (RAAEMQRRIQRGL) shows a compositional bias: basic and acidic residues. A compositionally biased stretch (acidic residues) spans 1253 to 1265 (DEDEDDGWSDEDE). At S1261 the chain carries Phosphoserine. Residues 1272–1288 (VDNKVEEAKIGHPDHAR) show a composition bias toward basic and acidic residues. Residues 1289-1298 (APPVTAAPLP) are compositionally biased toward low complexity. 8 tandem repeats follow at residues 1295 to 1300 (APLPSV), 1301 to 1306 (TPVPPA), 1307 to 1312 (VPVPQA), 1320 to 1325 (SPIPIA), 1326 to 1330 (PIPPS), 1335 to 1340 (PPVPLA), 1341 to 1346 (PPLPAV), and 1352 to 1357 (PPIPSA). Residues 1295–1357 (APLPSVTPVP…GFQEPPIPSA (63 aa)) are 8 X 6 AA repeats of [ATVSP]-P-[LVI]-P-[SPQILA]-[VAS]. Pro residues-rich tracts occupy residues 1299–1308 (SVTPVPPAVP) and 1323–1344 (PIAP…PPLP). T1301 carries the post-translational modification Phosphothreonine. Residues 1447–1460 (SIPPAGIPPPPPLP) are compositionally biased toward pro residues.

This sequence belongs to the PAN1 family. As to quaternary structure, component of the PAN1 actin cytoskeleton-regulatory complex. Phosphorylated by PRK1 on threonine residues in the L-x-x-Q-x-T-G motif of repeats 1-6 to 1-15. Phosphorylated by ARK1.

It localises to the cell membrane. The protein localises to the endosome membrane. It is found in the cytoplasm. The protein resides in the cytoskeleton. Its subcellular location is the actin patch. Functionally, component of the PAN1 actin cytoskeleton-regulatory complex required for the internalization of endosomes during actin-coupled endocytosis. The complex links the site of endocytosis to the cell membrane-associated actin cytoskeleton. Mediates uptake of external molecules and vacuolar degradation of plasma membrane proteins. Plays a role in the proper organization of the cell membrane-associated actin cytoskeleton and promotes its destabilization. This chain is Actin cytoskeleton-regulatory complex protein PAN1 (PAN1), found in Saccharomyces cerevisiae (strain YJM789) (Baker's yeast).